The chain runs to 552 residues: Macrophage colony-stimulating factor 1 (552 aa).

The signal sequence occupies residues 1 to 32 (MTARGAAGRCPSSTWLGSRLLLVCLLMSRSIA). Over 33-492 (KEVSEHCSHM…EGSSDPQIPE (460 aa)) the chain is Extracellular. Cystine bridges form between cysteine 39–cysteine 122, cysteine 80–cysteine 171, and cysteine 134–cysteine 178. Residues asparagine 107, asparagine 154, and asparagine 172 are each glycosylated (N-linked (GlcNAc...) asparagine). A compositionally biased stretch (low complexity) spans 197-207 (TPSSDPASASP). The tract at residues 197–293 (TPSSDPASAS…GGPVPGVEDI (97 aa)) is disordered. Positions 254–267 (PRSTCQTLESTEQP) are enriched in polar residues. A compositionally biased stretch (basic and acidic residues) spans 268-278 (NHGDRLTEDSQ). A glycan (O-linked (Xyl...) (chondroitin sulfate) serine) is linked at serine 308. Disordered stretches follow at residues 321-412 (KFSP…RVSN) and 439-465 (GKRS…ARPV). 3 stretches are compositionally biased toward basic and acidic residues: residues 350-364 (STED…DRPL), 382-396 (EKTD…DHQE), and 439-450 (GKRSTRDRRSPA). O-linked (GalNAc...) threonine glycosylation is present at threonine 360. A helical transmembrane segment spans residues 493–515 (SVFHLLVPGIILVLLTVGGLLFY). Topologically, residues 516–552 (KWKWRSHRDPQTLDSSVGRPEDSSLTQDEDRQVELPV) are cytoplasmic. A disordered region spans residues 525–552 (PQTLDSSVGRPEDSSLTQDEDRQVELPV). Over residues 543–552 (DEDRQVELPV) the composition is skewed to basic and acidic residues.

In terms of assembly, homodimer or heterodimer; disulfide-linked. Likely to exist in multiple forms: homodimer consisting of 2 identical 150-200 kDa proteoglycan subunits, heterodimer consisting of a 150-200 kDa proteoglycan subunit and a truncated 43 kDa subunit, and homodimer consisting of 2 identical 43 kDa subunits. Interacts with CSF1R. Post-translationally, N-glycosylated. In terms of processing, O-glycosylated; contains chondroitin sulfate.

It is found in the cell membrane. The protein resides in the secreted. It localises to the extracellular space. Functionally, cytokine that plays an essential role in the regulation of survival, proliferation and differentiation of hematopoietic precursor cells, especially mononuclear phagocytes, such as macrophages and monocytes. Promotes the release of pro-inflammatory chemokines, and thereby plays an important role in innate immunity and in inflammatory processes. Plays an important role in the regulation of osteoclast proliferation and differentiation, the regulation of bone resorption, and is required for normal bone development. Required for normal male and female fertility. Promotes reorganization of the actin cytoskeleton, regulates formation of membrane ruffles, cell adhesion and cell migration. Plays a role in lipoprotein clearance. This Mus musculus (Mouse) protein is Macrophage colony-stimulating factor 1 (Csf1).